Here is a 308-residue protein sequence, read N- to C-terminus: Ribonuclease Z (308 aa).

Zn(2+)-binding residues include His-61, His-63, Asp-65, His-66, His-142, Asp-211, and His-270. Asp-65 acts as the Proton acceptor in catalysis.

This sequence belongs to the RNase Z family. As to quaternary structure, homodimer. Requires Zn(2+) as cofactor.

The catalysed reaction is Endonucleolytic cleavage of RNA, removing extra 3' nucleotides from tRNA precursor, generating 3' termini of tRNAs. A 3'-hydroxy group is left at the tRNA terminus and a 5'-phosphoryl group is left at the trailer molecule.. Its function is as follows. Zinc phosphodiesterase, which displays some tRNA 3'-processing endonuclease activity. Probably involved in tRNA maturation, by removing a 3'-trailer from precursor tRNA. The sequence is that of Ribonuclease Z from Clostridium beijerinckii (strain ATCC 51743 / NCIMB 8052) (Clostridium acetobutylicum).